Here is a 66-residue protein sequence, read N- to C-terminus: Alpha-like toxin Bom3 (66 aa).

The LCN-type CS-alpha/beta domain occupies 2-66; it reads RDGYIAQPEN…PIVVGGEKCH (65 aa). 4 disulfides stabilise this stretch: Cys-12–Cys-65, Cys-16–Cys-37, Cys-23–Cys-47, and Cys-27–Cys-49.

It belongs to the long (4 C-C) scorpion toxin superfamily. Sodium channel inhibitor family. Alpha subfamily. Expressed by the venom gland.

It localises to the secreted. Alpha toxins bind voltage-independently at site-3 of sodium channels (Nav) and inhibit the inactivation of the activated channels, thereby blocking neuronal transmission. As it competes neither with the classical alpha-toxin AaH2 nor the beta-toxin Css2, this toxin is an alpha-like toxin. This chain is Alpha-like toxin Bom3, found in Buthus occitanus mardochei (Moroccan scorpion).